The chain runs to 1093 residues: Fused isobutyryl-CoA mutase (1093 aa).

Positions 1 to 20 (MTDLSDVSRTAAAKPPAVPG) are disordered. In terms of domain architecture, B12-binding spans 26–156 (KVRFVTAASL…AGMITDMAQR (131 aa)). His39 contacts adenosylcob(III)alamin. The GTPase chaperone MeaI stretch occupies residues 169–417 (LDTVVAGDRR…YQGLVGALGA (249 aa)). 219-224 (GAGKSS) provides a ligand contact to GTP. Positions 223, 248, 249, and 262 each coordinate Mg(2+). Residue Arg265 participates in GTP binding. Residues Glu310 and Thr311 each contribute to the Mg(2+) site. 357 to 360 (NKFD) is a binding site for GTP. Positions 418 to 579 (RGMSLKPGTL…MRENVPGSFP (162 aa)) are linker. Residues Phe587, Arg622, Arg728, Tyr772, Ser821, Arg856, and Lys861 each contribute to the substrate site. Residues Glu973 and Asn1092 each contribute to the GTP site.

The protein belongs to the IcmF family. In terms of assembly, homodimer. The cofactor is adenosylcob(III)alamin. Mg(2+) is required as a cofactor.

It carries out the reaction 2-methylpropanoyl-CoA = butanoyl-CoA. The catalysed reaction is 3-methylbutanoyl-CoA = 2,2-dimethylpropanoyl-CoA. It catalyses the reaction GTP + H2O = GDP + phosphate + H(+). Is prone to inactivation during catalytic turnover due to the occasional loss of the 5'-deoxyadenosine moiety and formation of the inactive cob(II)alamin cofactor in its active site. The GTPase activity of IcmF powers the ejection of the inactive cofactor and requires the presence of an acceptor protein, adenosyltransferase (ATR), for receiving it. ATR, in turn, catalyzes an adenosylation reaction converting cob(II)alamin in the presence of ATP and a reductant to the active AdoCbl cofactor. The repaired cofactor is then reloaded onto IcmF in a GTPase-gated step, regenerating active enzyme. The GTPase activity of IcmF is significantly decreased in the presence of excess of AdoCbl or cob(II)alamin and is higher in the apoenzyme state, indicating that the G-domain senses the presence and identity of the cofactor in the mutase active site. Functionally, catalyzes the reversible interconversion of isobutyryl-CoA and n-butyryl-CoA, and to a much lesser extent, of pivalyl-CoA and isovaleryl-CoA, using radical chemistry. Also exhibits GTPase activity, associated with its G-protein domain (MeaI) that functions as a chaperone that assists cofactor delivery and proper holo-enzyme assembly. The G-domain of IcmF also has a role in its cofactor repair. Does not display ATPase activity. This chain is Fused isobutyryl-CoA mutase, found in Cupriavidus metallidurans (strain ATCC 43123 / DSM 2839 / NBRC 102507 / CH34) (Ralstonia metallidurans).